Consider the following 336-residue polypeptide: Anthranilate phosphoribosyltransferase (336 aa).

Residues Gly-80, 83-84, Thr-88, 90-93, 108-116, and Ser-120 contribute to the 5-phospho-alpha-D-ribose 1-diphosphate site; these read GD, NIST, and KHGNRSITS. Position 80 (Gly-80) interacts with anthranilate. Position 92 (Ser-92) interacts with Mg(2+). Asn-111 contributes to the anthranilate binding site. An anthranilate-binding site is contributed by Arg-166. Residues Asp-224 and Glu-225 each coordinate Mg(2+).

This sequence belongs to the anthranilate phosphoribosyltransferase family. In terms of assembly, homodimer. Requires Mg(2+) as cofactor.

It catalyses the reaction N-(5-phospho-beta-D-ribosyl)anthranilate + diphosphate = 5-phospho-alpha-D-ribose 1-diphosphate + anthranilate. Its pathway is amino-acid biosynthesis; L-tryptophan biosynthesis; L-tryptophan from chorismate: step 2/5. Catalyzes the transfer of the phosphoribosyl group of 5-phosphorylribose-1-pyrophosphate (PRPP) to anthranilate to yield N-(5'-phosphoribosyl)-anthranilate (PRA). The polypeptide is Anthranilate phosphoribosyltransferase (Caldicellulosiruptor saccharolyticus (strain ATCC 43494 / DSM 8903 / Tp8T 6331)).